The chain runs to 669 residues: GTP-binding protein 1 (669 aa).

The disordered stretch occupies residues 1–32 (MATERSRSAMDSPVPASMFAPEPSSPGAARAA). Phosphoserine occurs at positions 6, 8, 12, 24, 25, 44, 47, and 69. Positions 158–389 (FLEVRVAVVG…LNLLSPRTSY (232 aa)) constitute a tr-type G domain. The segment at 167 to 174 (GNVDAGKS) is G1. A GTP-binding site is contributed by 167–174 (GNVDAGKS). Residues 206–210 (GRTSS) are G2. The tract at residues 252–255 (DLAG) is G3. GTP is bound by residues 252 to 256 (DLAGH) and 308 to 311 (TKID). The tract at residues 308 to 311 (TKID) is G4. The segment at 366–368 (SNV) is G5. Positions 573-595 (LLQTTNNSPMNSKPQQIKMQSTK) are enriched in polar residues. Residues 573–669 (LLQTTNNSPM…GACVTPASGC (97 aa)) form a disordered region. At Ser580 the chain carries Phosphoserine. The span at 646 to 657 (GRRRGGQRHKVK) shows a compositional bias: basic residues.

This sequence belongs to the TRAFAC class translation factor GTPase superfamily. Classic translation factor GTPase family. GTPBP1 subfamily. Interacts with EXOSC2/RRP4, EXOSC3/RRP40, EXOSC5/RRP46, HNRNPD, HNRNPR and SYNCRIP. Identified in a complex with AANAT mRNA, but does not bind mRNA by itself.

The protein resides in the cytoplasm. Functionally, promotes degradation of target mRNA species. Plays a role in the regulation of circadian mRNA stability. Binds GTP and has GTPase activity. The protein is GTP-binding protein 1 (GTPBP1) of Homo sapiens (Human).